Consider the following 305-residue polypeptide: tRNA dimethylallyltransferase 1 (305 aa).

10–17 (GPTASGKT) contributes to the ATP binding site. Residue 12–17 (TASGKT) participates in substrate binding. The tract at residues 35-38 (DSRQ) is interaction with substrate tRNA.

It belongs to the IPP transferase family. Monomer. The cofactor is Mg(2+).

It carries out the reaction adenosine(37) in tRNA + dimethylallyl diphosphate = N(6)-dimethylallyladenosine(37) in tRNA + diphosphate. Catalyzes the transfer of a dimethylallyl group onto the adenine at position 37 in tRNAs that read codons beginning with uridine, leading to the formation of N6-(dimethylallyl)adenosine (i(6)A). This Syntrophus aciditrophicus (strain SB) protein is tRNA dimethylallyltransferase 1.